The following is a 349-amino-acid chain: Ribosomal RNA large subunit methyltransferase Cfr (349 aa).

E89 serves as the catalytic Proton acceptor. A Radical SAM core domain is found at 96–331 (KAGWESFCIS…VTVRSQFGID (236 aa)). An intrachain disulfide couples C103 to C336. The [4Fe-4S] cluster site is built by C110, C114, and C117. S-adenosyl-L-methionine is bound by residues 156 to 157 (GE), S187, 210 to 212 (SLH), and N291. The active-site S-methylcysteine intermediate is the C336.

Belongs to the radical SAM superfamily. RlmN family. Cfr subfamily. It depends on [4Fe-4S] cluster as a cofactor.

It localises to the cytoplasm. It carries out the reaction adenosine(2503) in 23S rRNA + 2 reduced [2Fe-2S]-[ferredoxin] + 2 S-adenosyl-L-methionine = 8-methyladenosine(2503) in 23S rRNA + 5'-deoxyadenosine + L-methionine + 2 oxidized [2Fe-2S]-[ferredoxin] + S-adenosyl-L-homocysteine. Functionally, specifically methylates position 8 of adenine 2503 in 23S rRNA. Confers resistance to some classes of antibiotics. The chain is Ribosomal RNA large subunit methyltransferase Cfr from Bacillus velezensis (strain DSM 23117 / BGSC 10A6 / LMG 26770 / FZB42) (Bacillus amyloliquefaciens subsp. plantarum).